The chain runs to 4083 residues: Dynein heavy chain, cytoplasmic (4083 aa).

The segment at 1 to 1745 (MTDDQVAQAL…TIEQSCVSFC (1745 aa)) is stem. 3 coiled-coil regions span residues 127–166 (DAVVSTNSNLEAKQESINSARRKIKDLSLSLQSLQQFIEV), 381–402 (INQWEALLKEFTSLIRELMRKR), and 801–821 (KLDLQNLEVLINKIQLLVDQA). AAA stretches follow at residues 1746–1967 (YGFE…VLRN), 2026–2265 (SYLA…YKAD), 2373–2622 (SLES…WVRG), and 2716–2980 (TFAE…GNSQ). Residues 1784-1791 (GPAGTGKT), 2064-2071 (GDAGTGKT), 2412-2419 (GPPGSGKT), and 2754-2761 (GPNYSGKT) each bind ATP. Residues 2987–3294 (LTSLRRFQSL…RSIKLMESLT (308 aa)) are stalk. Coiled-coil stretches lie at residues 3015–3085 (LEKL…NERR), 3223–3302 (LKEE…RWIK), and 3527–3607 (LEKE…VEDL). AAA stretches follow at residues 3364 to 3592 (MVNP…EIAK) and 3748 to 3952 (LKSL…FLDH).

Belongs to the dynein heavy chain family. As to quaternary structure, consists of at least two heavy chains and a number of intermediate and light chains.

It is found in the cytoplasm. The protein resides in the cytoskeleton. Cytoplasmic dynein acts as a motor for the intracellular retrograde motility of vesicles and organelles along microtubules. Dynein has ATPase activity; the force-producing power stroke is thought to occur on release of ADP. Required to maintain uniform nuclear distribution in hyphae. May play an important role in the proper orientation of the mitotic spindle into the budding daughter cell yeast. Probably required for normal progression of the cell cycle. The chain is Dynein heavy chain, cytoplasmic (DYN1) from Eremothecium gossypii (strain ATCC 10895 / CBS 109.51 / FGSC 9923 / NRRL Y-1056) (Yeast).